Consider the following 266-residue polypeptide: Glucosamine-6-phosphate deaminase (266 aa).

The active-site Proton acceptor; for enolization step is D72. D141 (for ring-opening step) is an active-site residue. H143 functions as the Proton acceptor; for ring-opening step in the catalytic mechanism. E148 acts as the For ring-opening step in catalysis.

Belongs to the glucosamine/galactosamine-6-phosphate isomerase family. NagB subfamily. In terms of assembly, homohexamer.

It catalyses the reaction alpha-D-glucosamine 6-phosphate + H2O = beta-D-fructose 6-phosphate + NH4(+). The protein operates within amino-sugar metabolism; N-acetylneuraminate degradation; D-fructose 6-phosphate from N-acetylneuraminate: step 5/5. With respect to regulation, allosterically activated by N-acetylglucosamine 6-phosphate (GlcNAc6P). Its function is as follows. Catalyzes the reversible isomerization-deamination of glucosamine 6-phosphate (GlcN6P) to form fructose 6-phosphate (Fru6P) and ammonium ion. This is Glucosamine-6-phosphate deaminase from Salmonella typhimurium (strain LT2 / SGSC1412 / ATCC 700720).